Reading from the N-terminus, the 540-residue chain is Chaperonin GroEL 2 (540 aa).

ATP contacts are provided by residues 29-32 (TMGP), lysine 50, 86-90 (DGTTT), glycine 414, and aspartate 496.

This sequence belongs to the chaperonin (HSP60) family. In terms of assembly, forms a cylinder of 14 subunits composed of two heptameric rings stacked back-to-back. Interacts with the co-chaperonin GroES.

The protein localises to the cytoplasm. The enzyme catalyses ATP + H2O + a folded polypeptide = ADP + phosphate + an unfolded polypeptide.. Its function is as follows. Together with its co-chaperonin GroES, plays an essential role in assisting protein folding. The GroEL-GroES system forms a nano-cage that allows encapsulation of the non-native substrate proteins and provides a physical environment optimized to promote and accelerate protein folding. The polypeptide is Chaperonin GroEL 2 (Rhodopirellula baltica (strain DSM 10527 / NCIMB 13988 / SH1)).